The chain runs to 379 residues: Putative zinc metalloprotease BR1156/BS1330_I1152 (379 aa).

H33 contributes to the Zn(2+) binding site. Residue E34 is part of the active site. H37 is a binding site for Zn(2+). A run of 4 helical transmembrane segments spans residues 39–61 (LVAR…ELLG), 122–144 (VFAG…FALY), 305–327 (FDWL…LFPL), and 355–377 (IFYR…NDLF). Positions 133-208 (TIAIFSVFFA…LNFTVERDGK (76 aa)) constitute a PDZ domain.

It belongs to the peptidase M50B family. The cofactor is Zn(2+).

It localises to the cell inner membrane. The polypeptide is Putative zinc metalloprotease BR1156/BS1330_I1152 (Brucella suis biovar 1 (strain 1330)).